A 278-amino-acid polypeptide reads, in one-letter code: MRGEASRIADRESRDSLAPKLRDTREDAWRIGNELFTITKVLDDSIQLERALTDPSRPVADKVAVLTELLGDNVHPMTMEIMTDLVSRHWSRARDIANAVEDFGVDAMMYYADATGATLQVSVELSELHSALLNLPVVRAKLYDYQATSEARVKLFREVFSGKTLNKVTMRLAEHATCNLRRRRYLETIQWMINKFSRHMGESMVTVTTATPLKKEQIKRLVEVYSAKVGRQVHINSVVDPTVLGGMRIQVGDEVTDNTVVAQLQNLHRKVQTEATPA.

It belongs to the ATPase delta chain family. F-type ATPases have 2 components, F(1) - the catalytic core - and F(0) - the membrane proton channel. F(1) has five subunits: alpha(3), beta(3), gamma(1), delta(1), epsilon(1). F(0) has three main subunits: a(1), b(2) and c(10-14). The alpha and beta chains form an alternating ring which encloses part of the gamma chain. F(1) is attached to F(0) by a central stalk formed by the gamma and epsilon chains, while a peripheral stalk is formed by the delta and b chains.

Its subcellular location is the cell membrane. In terms of biological role, f(1)F(0) ATP synthase produces ATP from ADP in the presence of a proton or sodium gradient. F-type ATPases consist of two structural domains, F(1) containing the extramembraneous catalytic core and F(0) containing the membrane proton channel, linked together by a central stalk and a peripheral stalk. During catalysis, ATP synthesis in the catalytic domain of F(1) is coupled via a rotary mechanism of the central stalk subunits to proton translocation. This protein is part of the stalk that links CF(0) to CF(1). It either transmits conformational changes from CF(0) to CF(1) or is implicated in proton conduction. The chain is ATP synthase subunit delta from Bifidobacterium longum subsp. infantis (strain ATCC 15697 / DSM 20088 / JCM 1222 / NCTC 11817 / S12).